Here is a 415-residue protein sequence, read N- to C-terminus: Dibenzothiophene monooxygenase (415 aa).

FMN contacts are provided by residues Y94, 127–132 (NASSEN), 157–161 (KHFSS), R280, 365–366 (IG), and T387. The tract at residues 129–140 (SSENNSHILDWK) is lid loop.

Belongs to the DszC flavin monooxygenase family. Homotetramer.

It localises to the cytoplasm. The enzyme catalyses dibenzothiophene + 2 FMNH2 + 2 O2 = dibenzothiophene 5,5-dioxide + 2 FMN + 2 H2O + 2 H(+). It carries out the reaction dibenzothiophene + FMNH2 + O2 = dibenzothiophene 5-oxide + FMN + H2O + H(+). The catalysed reaction is dibenzothiophene 5-oxide + FMNH2 + O2 = dibenzothiophene 5,5-dioxide + FMN + H2O + H(+). It functions in the pathway sulfur metabolism; dibenzothiophene degradation. Its activity is regulated as follows. Inhibited at high concentrations of FMN or FAD. Its function is as follows. Catalyzes the first step of the '4S' desulfurization pathway that removes covalently bound sulfur from dibenzothiophene (DBT) without breaking carbon-carbon bonds. Sulfur dioxygenase which converts DBT to DBT-sulfone (DBTO2 or DBT 5,5-dioxide) probably in a stepwise manner. In addition to FMNH2 can also use FAD (although FAD is less efficient). In Mycolicibacterium goodii (Mycobacterium goodii), this protein is Dibenzothiophene monooxygenase.